The following is a 1440-amino-acid chain: Glucose transporter type 1 (1440 aa).

The signal sequence occupies residues 1–23; that stretch reads MAFLCAPGLTFFLTYSIFSAVLG. The Cytoplasmic portion of the chain corresponds to 24-67; it reads MLQFGYNTGVINAPEKNIENFMKDVYKDRYGEDISEEFIQQLYS. The chain crosses the membrane as a helical span at residues 68-88; sequence VAVSIFAIGGMLGGFSGGWMA. At 89 to 95 the chain is on the extracellular side; it reads NRFGRKG. The helical transmembrane segment at 96-116 threads the bilayer; it reads GLLLNNVLGIAGACLMGFTKV. Residues 117 to 127 lie on the Cytoplasmic side of the membrane; the sequence is SHSYEMLFLGR. The chain crosses the membrane as a helical span at residues 128-148; the sequence is FIIGVNCGLNTSLVPMYISEI. The Extracellular segment spans residues 149–162; sequence APLNLRGGLGTVNQ. Residue glutamine 162 participates in D-glucose binding. A helical membrane pass occupies residues 163 to 183; it reads LAVTVGLLLSQVLGIEQILGT. The Cytoplasmic segment spans residues 184–186; it reads NEG. The chain crosses the membrane as a helical span at residues 187 to 207; that stretch reads WPILLGLAICPAILQLILLPV. Topologically, residues 208 to 272 are extracellular; that stretch reads CPESPRYLLI…LICSPTLRPP (65 aa). The helical transmembrane segment at 273–293 threads the bilayer; it reads LIIGIVMQLSQQFSGINAVFY. D-glucose contacts are provided by residues 283-284 and asparagine 289; that span reads QQ. Residues 294 to 310 are Cytoplasmic-facing; sequence YSTSLFMSSGLTEESAK. Residues 311-331 traverse the membrane as a helical segment; the sequence is FATIGIGAIMVVMTLVSIPLM. The Extracellular segment spans residues 332-339; the sequence is DRTGRRTL. Residues 340–360 traverse the membrane as a helical segment; that stretch reads HLYGLGGMFIFSIFITISFLI. At 361–372 the chain is on the cytoplasmic side; sequence KEMIDWMSYLSV. The chain crosses the membrane as a helical span at residues 373–393; the sequence is VATLGFVVFFAVGPGSIPWMI. Tryptophan 391 is a binding site for D-glucose. Residues 394 to 405 are Extracellular-facing; it reads TAELFSQGPRPS. Residues 406-426 traverse the membrane as a helical segment; that stretch reads AMAIAVLVNWMANFVVGIGFP. At 427–429 the chain is on the cytoplasmic side; the sequence is SMK. Residues 430–450 form a helical membrane-spanning segment; the sequence is TALENYTFLPFSVFLAIFWIF. The Extracellular segment spans residues 451 to 534; sequence TYKKVPETKN…GPYPLSDSTN (84 aa). Residues asparagine 460 and asparagine 480 are each glycosylated (N-linked (GlcNAc...) asparagine). The chain crosses the membrane as a helical span at residues 535 to 555; sequence LLGPGSSSYGPGGVLGLAGSG. Over 556 to 1440 the chain is Cytoplasmic; sequence SGLGGQCYTN…RKYTDFLRKK (885 aa). Disordered stretches follow at residues 628–708, 725–808, 966–987, 1000–1083, 1304–1330, and 1380–1401; these read ERFL…SRYA, QANP…HSVM, APEG…SELP, FLAD…GSYH, LEGA…PLTH, and ANSP…GHHV. A compositionally biased stretch (polar residues) spans 669 to 678; it reads PPDSASVRST. Low complexity predominate over residues 686–704; that stretch reads QPQQVHHQQQQVHHQQQHQ. Residues 730-739 are compositionally biased toward pro residues; sequence QAPPQQPAPP. Over residues 754-789 the composition is skewed to basic residues; sequence CQQRKHSHSPHHSRHTSPHSHHHHSHHSRHSRRSRR. Over residues 1313–1330 the composition is skewed to low complexity; that stretch reads STTSEHSSSLPSPQPLTH.

Belongs to the major facilitator superfamily. Sugar transporter (TC 2.A.1.1) family. Glucose transporter subfamily.

It is found in the membrane. Functionally, facilitative glucose transporter. This chain is Glucose transporter type 1 (Glut1), found in Drosophila melanogaster (Fruit fly).